A 402-amino-acid polypeptide reads, in one-letter code: Argininosuccinate synthase (402 aa).

9-17 (AYSGGLDTS) is a binding site for ATP. Tyr-87 serves as a coordination point for L-citrulline. Gly-117 is an ATP binding site. 3 residues coordinate L-aspartate: Thr-119, Asn-123, and Asp-124. Residue Asn-123 coordinates L-citrulline. The L-citrulline site is built by Arg-127, Ser-176, Ser-185, Glu-261, and Tyr-273.

This sequence belongs to the argininosuccinate synthase family. Type 1 subfamily. As to quaternary structure, homotetramer.

Its subcellular location is the cytoplasm. It carries out the reaction L-citrulline + L-aspartate + ATP = 2-(N(omega)-L-arginino)succinate + AMP + diphosphate + H(+). Its pathway is amino-acid biosynthesis; L-arginine biosynthesis; L-arginine from L-ornithine and carbamoyl phosphate: step 2/3. The protein is Argininosuccinate synthase of Chlorobium phaeobacteroides (strain BS1).